We begin with the raw amino-acid sequence, 1117 residues long: WD repeat and HMG-box DNA-binding protein 1 (1117 aa).

WD repeat units lie at residues 11–50 (GHTE…DPKS), 52–91 (NVGE…GILT), 93–131 (FTTN…QQQT), 134–173 (GHDA…CAVS), 184–223 (VNAK…NPFD), 228–267 (SISQ…CMER), and 271–310 (EKGY…SGKV). Residues S333 and S377 each carry the phosphoserine modification. K390 participates in a covalent cross-link: Glycyl lysine isopeptide (Lys-Gly) (interchain with G-Cter in SUMO2). The residue at position 664 (K664) is an N6-acetyllysine. The tract at residues 816–885 (LAETQSEEEK…NLFQSANSSD (70 aa)) is disordered. Position 819 is a phosphothreonine (T819). A Phosphoserine modification is found at S821. Basic and acidic residues predominate over residues 861 to 872 (DTVSEEKPESHN). Positions 873 to 885 (HGQNLFQSANSSD) are enriched in polar residues. S910 and S923 each carry phosphoserine. Residues 911–1005 (SKEPAVSANS…AVCLQNSENQ (95 aa)) form a disordered region. Positions 917-943 (SANSTRSANILDSMNKSSRKSTSLNRM) are enriched in polar residues. N6-acetyllysine is present on K953. Polar residues predominate over residues 962–974 (KQASAASYFQKRT). The segment covering 975-987 (PQADKTEEVKENP) has biased composition (basic and acidic residues). The segment covering 988-1004 (KSSSSDAPAVCLQNSEN) has biased composition (polar residues). A DNA-binding region (HMG box) is located at residues 1004–1073 (NQRPKTGFQM…SDGAEAKKRK (70 aa)). Residue S1030 is modified to Phosphoserine. Positions 1054 to 1074 (WTNKAKGETASDGAEAKKRKR) are disordered. Residue K1116 forms a Glycyl lysine isopeptide (Lys-Gly) (interchain with G-Cter in SUMO1); alternate linkage. K1116 participates in a covalent cross-link: Glycyl lysine isopeptide (Lys-Gly) (interchain with G-Cter in SUMO2); alternate.

In terms of assembly, trimer. Interacts with the polymerase alpha catalytic subunit POLA1. Interacts with MCM10. Interacts with DNA2. Interacts with CDC45 and GINS2 subunit of GINS complex; these interactions associate WDHD1 with the CMG helicase complex.

The protein localises to the nucleus. Its subcellular location is the nucleoplasm. In terms of biological role, core replisome component that acts as a replication initiation factor. Binds directly to the CMG complex and functions as a hub to recruit additional proteins to the replication fork. The protein is WD repeat and HMG-box DNA-binding protein 1 (Wdhd1) of Mus musculus (Mouse).